A 256-amino-acid polypeptide reads, in one-letter code: Hemolymph lipopolysaccharide-binding protein (256 aa).

Residues 1–21 form the signal peptide; the sequence is MMNTRALLPLSVLLMATLCLC. Residues 22-33 constitute a propeptide that is removed on maturation; it reads ELPIPILQRFVR. Asn-56 carries an N-linked (GlcNAc...) asparagine glycan. The C-type lectin domain maps to 146-256; it reads IICQQEGGHL…KLPFVCEVEL (111 aa). Intrachain disulfides connect Cys-148/Cys-252 and Cys-230/Cys-244.

As to expression, hemolymph.

It is found in the secreted. Functionally, participates probably in the elimination of foreign substances invading the insect abdominal cavity, and in trapping intracellular symbionts, when they leak from the mycetomes into the hemolymph. The polypeptide is Hemolymph lipopolysaccharide-binding protein (Periplaneta americana (American cockroach)).